A 91-amino-acid chain; its full sequence is Small ribosomal subunit protein uS19 (91 aa).

Belongs to the universal ribosomal protein uS19 family.

Functionally, protein S19 forms a complex with S13 that binds strongly to the 16S ribosomal RNA. This Synechococcus sp. (strain CC9902) protein is Small ribosomal subunit protein uS19.